Reading from the N-terminus, the 236-residue chain is MEKREELYRGKAKSVYKTDDADRLILLFRNDTSAFDGKRIEQLDRKGMVNNKFNAFIMQKLEEAGVPTQFDKLLGDNECLVKKLDMIPVECVVRNYAAGSLVKRLGIEEGTRLNPYTFELFLKDDAKGDPFINESHVVAFGWGTAEQLVRMKELSIKVNEVLTKLFDDAGLLLVDFKLEFGVFHGEIVLGDEFSPDGCRLWDKDTRKKMDKDRFRQGLGDVIEAYEEVANRLGVPL.

This sequence belongs to the SAICAR synthetase family.

The catalysed reaction is 5-amino-1-(5-phospho-D-ribosyl)imidazole-4-carboxylate + L-aspartate + ATP = (2S)-2-[5-amino-1-(5-phospho-beta-D-ribosyl)imidazole-4-carboxamido]succinate + ADP + phosphate + 2 H(+). The protein operates within purine metabolism; IMP biosynthesis via de novo pathway; 5-amino-1-(5-phospho-D-ribosyl)imidazole-4-carboxamide from 5-amino-1-(5-phospho-D-ribosyl)imidazole-4-carboxylate: step 1/2. This chain is Phosphoribosylaminoimidazole-succinocarboxamide synthase, found in Pseudomonas savastanoi pv. phaseolicola (strain 1448A / Race 6) (Pseudomonas syringae pv. phaseolicola (strain 1448A / Race 6)).